A 294-amino-acid chain; its full sequence is ATP synthase gamma chain (294 aa).

Belongs to the ATPase gamma chain family. As to quaternary structure, F-type ATPases have 2 components, CF(1) - the catalytic core - and CF(0) - the membrane proton channel. CF(1) has five subunits: alpha(3), beta(3), gamma(1), delta(1), epsilon(1). CF(0) has three main subunits: a, b and c.

It localises to the cell inner membrane. Functionally, produces ATP from ADP in the presence of a proton gradient across the membrane. The gamma chain is believed to be important in regulating ATPase activity and the flow of protons through the CF(0) complex. The protein is ATP synthase gamma chain of Caulobacter sp. (strain K31).